A 434-amino-acid chain; its full sequence is G2/mitotic-specific cyclin-2 (434 aa).

This sequence belongs to the cyclin family. Cyclin AB subfamily. As to quaternary structure, interacts with the CDC2 protein kinase to form a serine/threonine kinase holoenzyme complex also known as maturation promoting factor (MPF). The cyclin subunit imparts substrate specificity to the complex.

In terms of biological role, essential for the control of the cell cycle at the G2/M (mitosis) transition. This Medicago sativa subsp. varia (Alfalfa) protein is G2/mitotic-specific cyclin-2.